The primary structure comprises 794 residues: Copper-exporting P-type ATPase (794 aa).

HMA domains follow at residues 4–69 (TTLT…YDVA) and 71–137 (EQVE…YDAE). Cu(+) contacts are provided by C15, C18, C82, and C85. A run of 6 helical transmembrane segments spans residues 161–181 (IISA…ISPI), 186–206 (ILVN…IIGW), 225–245 (VLVA…MMMW), 255–275 (LYFE…YLEA), 410–430 (YFVP…IIFV), and 437–457 (PALV…LGLA). Catalysis depends on D494, which acts as the 4-aspartylphosphate intermediate. Positions 689 and 693 each coordinate Mg(2+). 2 consecutive transmembrane segments (helical) span residues 747-767 (LFWA…GLLA) and 773-789 (AAMA…ALRL).

This sequence belongs to the cation transport ATPase (P-type) (TC 3.A.3) family. Type IB subfamily.

It localises to the cell membrane. The catalysed reaction is Cu(+)(in) + ATP + H2O = Cu(+)(out) + ADP + phosphate + H(+). Functionally, involved in copper export. This Staphylococcus epidermidis (strain ATCC 35984 / DSM 28319 / BCRC 17069 / CCUG 31568 / BM 3577 / RP62A) protein is Copper-exporting P-type ATPase (copA).